The primary structure comprises 283 residues: Pantothenate synthetase (283 aa).

31-38 provides a ligand contact to ATP; that stretch reads MGALHDGH. Catalysis depends on His-38, which acts as the Proton donor. A (R)-pantoate-binding site is contributed by Gln-62. Residue Gln-62 coordinates beta-alanine. ATP is bound at residue 148–151; it reads GKKD. Gln-154 contributes to the (R)-pantoate binding site. ATP contacts are provided by residues Val-177 and 185–188; that span reads KSSR.

This sequence belongs to the pantothenate synthetase family. As to quaternary structure, homodimer.

The protein localises to the cytoplasm. The enzyme catalyses (R)-pantoate + beta-alanine + ATP = (R)-pantothenate + AMP + diphosphate + H(+). It participates in cofactor biosynthesis; (R)-pantothenate biosynthesis; (R)-pantothenate from (R)-pantoate and beta-alanine: step 1/1. Catalyzes the condensation of pantoate with beta-alanine in an ATP-dependent reaction via a pantoyl-adenylate intermediate. This is Pantothenate synthetase from Staphylococcus aureus (strain MSSA476).